Consider the following 370-residue polypeptide: DNA replication and repair protein RecF (370 aa).

ATP is bound at residue 30 to 37 (GENAQGKT).

Belongs to the RecF family.

Its subcellular location is the cytoplasm. Functionally, the RecF protein is involved in DNA metabolism; it is required for DNA replication and normal SOS inducibility. RecF binds preferentially to single-stranded, linear DNA. It also seems to bind ATP. The polypeptide is DNA replication and repair protein RecF (Staphylococcus aureus (strain bovine RF122 / ET3-1)).